Reading from the N-terminus, the 754-residue chain is Protein NUCLEOLAR FACTOR 1 (754 aa).

Disordered regions lie at residues 1 to 56, 69 to 166, and 390 to 413; these read MAPN…EAMV, SLGS…ELST, and EDTDDCDGEKTTSKNGNSIKQKSS. The segment covering 42-52 has biased composition (acidic residues); sequence SPEESSIEAES. The span at 80-93 shows a compositional bias: basic and acidic residues; the sequence is MNKRRQREEEGKSD. 2 stretches are compositionally biased toward acidic residues: residues 94-110 and 138-161; these read TEEDEDDEDEDEEENSG and DTQEDNDNQSEEEDPDDYETDEEV. Polar residues predominate over residues 402–413; sequence SKNGNSIKQKSS.

Belongs to the UTP25 family. As to quaternary structure, component of the ribosomal small subunit (SSU) processome composed of at least 40 protein subunits and snoRNA U3. Interacts with THAL in the nucleus. In terms of tissue distribution, preferentially expressed in differentiating cells in young tissues such as floral buds, ovules, embryos, secondary roots, pollen, young seedlings and vascular bundles. Observed ubiquitously.

It is found in the nucleus. The protein localises to the nucleolus. In terms of biological role, DEAD-box RNA helicase-like protein required for pre-18S rRNA processing, specifically at sites A0, A1, and A2. Involved in the control of rRNA expression. Required for embryo development and female gametogenesis. This Arabidopsis thaliana (Mouse-ear cress) protein is Protein NUCLEOLAR FACTOR 1.